Here is a 585-residue protein sequence, read N- to C-terminus: Arginine--tRNA ligase (585 aa).

Residues 126 to 136 carry the 'HIGH' region motif; sequence PNIAKEMHVGH.

Belongs to the class-I aminoacyl-tRNA synthetase family. In terms of assembly, monomer.

It is found in the cytoplasm. The enzyme catalyses tRNA(Arg) + L-arginine + ATP = L-arginyl-tRNA(Arg) + AMP + diphosphate. In Cyanothece sp. (strain PCC 7425 / ATCC 29141), this protein is Arginine--tRNA ligase.